The sequence spans 130 residues: Early E3B 14.5 kDa protein (130 aa).

The signal sequence occupies residues 1 to 19 (MKRIVTFVLLIFCALPVLC). The chain crosses the membrane as a helical span at residues 53–77 (AWLYAIISVMVFCSTIFALAIYPYL).

This sequence belongs to the adenoviridae E3_14 family. Phosphorylated on serine; O-glycosylated, but not N-glycosylated.

It localises to the host membrane. Down-regulates the EGF receptor and prevents cytolysis by TNF. This Human adenovirus C serotype 6 (HAdV-6) protein is Early E3B 14.5 kDa protein.